Reading from the N-terminus, the 502-residue chain is Serine/threonine-protein kinase SKS1 (502 aa).

The region spanning phenylalanine 10–threonine 338 is the Protein kinase domain. ATP contacts are provided by residues isoleucine 16–valine 24 and lysine 39. Catalysis depends on aspartate 186, which acts as the Proton acceptor. 2 stretches are compositionally biased toward low complexity: residues glutamine 376 to glutamate 391 and glutamate 399 to glutamine 410. The segment at glutamine 376 to asparagine 439 is disordered. Residues glutamine 411–serine 420 show a composition bias toward acidic residues.

The protein belongs to the protein kinase superfamily. Ser/Thr protein kinase family.

It carries out the reaction L-seryl-[protein] + ATP = O-phospho-L-seryl-[protein] + ADP + H(+). The catalysed reaction is L-threonyl-[protein] + ATP = O-phospho-L-threonyl-[protein] + ADP + H(+). May have a role in glucose regulation. The polypeptide is Serine/threonine-protein kinase SKS1 (SKS1) (Saccharomyces cerevisiae (strain ATCC 204508 / S288c) (Baker's yeast)).